The following is a 76-amino-acid chain: Large ribosomal subunit protein bL28 (76 aa).

The interval 21-42 (RGKAKKEGGVGKHITKTSRRRQ) is disordered. The segment covering 33-42 (HITKTSRRRQ) has biased composition (basic residues).

The protein belongs to the bacterial ribosomal protein bL28 family.

This chain is Large ribosomal subunit protein bL28, found in Halothermothrix orenii (strain H 168 / OCM 544 / DSM 9562).